The following is a 296-amino-acid chain: Transmembrane protein 156 (296 aa).

At 1 to 4 (MTKT) the chain is on the cytoplasmic side. The helical transmembrane segment at 5–25 (ALLKLFVAIVITFILILPEYF) threads the bilayer. Topologically, residues 26-211 (KTPKERTLEL…EMDIKNITCS (186 aa)) are extracellular. Residues Asn-45 and Asn-156 are each glycosylated (N-linked (GlcNAc...) asparagine). A helical membrane pass occupies residues 212 to 232 (MKITWYILVLLVFIFLIILTI). The Cytoplasmic segment spans residues 233 to 296 (RKILEGQRRV…QEVLPPIPEL (64 aa)).

The protein resides in the membrane. This chain is Transmembrane protein 156 (TMEM156), found in Homo sapiens (Human).